Reading from the N-terminus, the 50-residue chain is uncharacterized protein (50 aa).

A signal peptide spans 1-22; the sequence is MSKVAALGWGTLVYLGVGLLLA.

This is an uncharacterized protein from Dictyostelium discoideum (Social amoeba).